Consider the following 318-residue polypeptide: MNELEQLRQFTTVVADTGDFQLMKQYKPQDATTNPSLIFKAVQKPEYRPLLEQAVRDHHGNSGLDGVMDQLLIAFGCEILAIVPGRVSTEVDARLSFDTEATVAKARHLIGLYEQRGVARERVLIKIASTWEGIRAAEVLQRENIRCNMTLLFSLAQAVACAEAGAQLISPFVGRILDWYKKQAGEKWDPVANGGENDPGVRSVRQIYDYYKKFGYATEVMGASFRGTDQILSLAGCDLLTISPELLEQLAGGQSAVALKLSVEQAQAGNVARIAADEPAFRWQLNEDAMATEKLSEGIRLFAADAVKLEKLVGELAS.

K126 (schiff-base intermediate with substrate) is an active-site residue.

It belongs to the transaldolase family. Type 1 subfamily. Homodimer.

The protein localises to the cytoplasm. The catalysed reaction is D-sedoheptulose 7-phosphate + D-glyceraldehyde 3-phosphate = D-erythrose 4-phosphate + beta-D-fructose 6-phosphate. It participates in carbohydrate degradation; pentose phosphate pathway; D-glyceraldehyde 3-phosphate and beta-D-fructose 6-phosphate from D-ribose 5-phosphate and D-xylulose 5-phosphate (non-oxidative stage): step 2/3. In terms of biological role, transaldolase is important for the balance of metabolites in the pentose-phosphate pathway. The protein is Transaldolase of Cupriavidus metallidurans (strain ATCC 43123 / DSM 2839 / NBRC 102507 / CH34) (Ralstonia metallidurans).